Reading from the N-terminus, the 2443-residue chain is NFX1-type zinc finger-containing protein 1 homolog (2443 aa).

3 disordered regions span residues 212–339 (PHKQ…EGDH), 545–566 (SSDS…NVYG), and 583–672 (HRDN…FVSP). Over residues 246–263 (ISISNSSPPGLSSVSPIP) the composition is skewed to low complexity. Over residues 275–294 (PQPPGLSIPAPPGISLPTPP) the composition is skewed to pro residues. Polar residues predominate over residues 297–310 (SLQNHQNDQFEQAH). The span at 311 to 322 (STISRMSENSSS) shows a compositional bias: low complexity. A compositionally biased stretch (polar residues) spans 545-564 (SSDSGRQVLSESRGAGSSNV). Composition is skewed to basic and acidic residues over residues 601 to 638 (GEVH…RRDQ) and 662 to 672 (EHSRDDKFVSP). In terms of domain architecture, UvrD-like helicase ATP-binding spans 1040–1545 (MDESQRLAFC…MNLTISDKIV (506 aa)). 1061–1068 (GPPGTGKT) serves as a coordination point for ATP. NF-X1-type zinc fingers lie at residues 1769 to 1791 (CGHV…RCLY), 1853 to 1873 (CGHA…ECSQ), 1912 to 1930 (CPHK…ECME), and 2027 to 2044 (CGHT…PCKA).

The protein belongs to the ZNFX1 family. Interacts with ego-1, csr-1, wago-1 and prg-1. Interacts with wago-4; the interaction promotes the transmission of epigenetic information across generations. Expressed in germs cells. Not expressed in somatic tissues.

The protein localises to the cytoplasm. Its subcellular location is the perinuclear region. It localises to the cytoplasmic granule. The enzyme catalyses ATP + H2O = ADP + phosphate + H(+). In terms of biological role, epigenetic inheritance factor which, in association with the Argonaute protein wago-4, mediates small RNA-directed transgenerational epigenetic inheritance and thus balances the transgenerational inheritance of epigenetic information. Specifically, maintains a balanced production of small RNAs by preventing the spread of epigenetic signals towards the 5'-end of target mRNAs. Plays a role in small RNA-induced gene silencing in the germline. The protein is NFX1-type zinc finger-containing protein 1 homolog of Caenorhabditis elegans.